The sequence spans 557 residues: MALSTLNREVIKKNLQNEEYDVVIIGGGITGAGIALDASQRGMKVALVEMQDFAQGTSSRSTKLVHGGLRYLKQAQIKVVAETGKERAIVYENGPHVTTPEWMLLPMHKGGTFGKFTTNLGLTAYDRLAGVKKYERKKMLSKKQTLNKEPLVKKDGLKGGGYYVEYRTDDARLTIEVMKRAEENGAEILNHTKSTDFIYDSKSKVRGIEVQDLLTGEMYEINAKKVINAAGPWVDEVRKKDYTRNNKQLRLTKGVHVVIDQSKFPLRQAVYFDTEKDGRMIFAIPREGKAYVGTTDTFYDNDKTKPLTTQEDRDYLIDAINYMFPDVNVKDEDIESTWAGVRPLILEDGKDPSEISRKDEIWEGKSGLLTIAGGKLTGYRHMALEIVDLLAKRLKQEYKLTFAECKTKHTPISGGDVGGSANFESFVERKVEEGKAIGLQADVAKRLASKYGSNVDKLYNIAQIAQDKDLKLPLELYVELVYSVQNEMVFKPTDFLIRRSGKLYFNINEVKQYKDAVVEELAKLLNYTQSQQNEFTKEINIAIEEATRGNEQLAVLK.

21–49 (DVVIIGGGITGAGIALDASQRGMKVALVE) contacts FAD.

This sequence belongs to the FAD-dependent glycerol-3-phosphate dehydrogenase family. The cofactor is FAD.

The protein localises to the cytoplasm. The catalysed reaction is a quinone + sn-glycerol 3-phosphate = dihydroxyacetone phosphate + a quinol. The protein operates within polyol metabolism; glycerol degradation via glycerol kinase pathway; glycerone phosphate from sn-glycerol 3-phosphate (aerobic route): step 1/1. The sequence is that of Aerobic glycerol-3-phosphate dehydrogenase (glpD) from Staphylococcus haemolyticus (strain JCSC1435).